Here is a 440-residue protein sequence, read N- to C-terminus: Inner membrane metabolite transport protein YhjE (440 aa).

The Cytoplasmic portion of the chain corresponds to 1–34 (MQATATTLDHEQEYTPINSRNKVLVASLIGTAIE). A helical membrane pass occupies residues 35–55 (FFDFYIYATAAVIVFPHIFFP). At 56-66 (QGDPTAATLQS) the chain is on the periplasmic side. A helical membrane pass occupies residues 67 to 87 (LATFAIAFVARPIGSAVFGHF). The Cytoplasmic portion of the chain corresponds to 88–108 (GDRVGRKATLVASLLTMGIST). The next 2 helical transmembrane spans lie at 109 to 129 (VVIGLLPGYATIGIFAPLLLA) and 130 to 150 (LARFGQGLGLGGEWGGAALLA). Residues 151–167 (TENAPPRKRALYGSFPQ) are Cytoplasmic-facing. A helical transmembrane segment spans residues 168-188 (LGAPIGFFFANGTFLLLSWLL). Residues 189–192 (TDEQ) lie on the Periplasmic side of the membrane. A helical transmembrane segment spans residues 193–213 (FMSWGWRVPFIFSAVLVIIGL). The Cytoplasmic segment spans residues 214 to 248 (YVRVSLHESPVFEKVAKAKKQVKIPLGTLLTKHVR). A helical transmembrane segment spans residues 249 to 269 (VTVLGTFIMLATYTLFYIMTV). The Periplasmic portion of the chain corresponds to 270–289 (YSMTFSTAAAPVGLGLPRNE). A helical membrane pass occupies residues 290–310 (VLWMLMMAVIGFGVMVPVAGL). Residues 311–320 (LADAFGRRKS) lie on the Cytoplasmic side of the membrane. The helical transmembrane segment at 321–341 (MVIITTLIILFALFAFNPLLG) threads the bilayer. At 342–345 (SGNP) the chain is on the periplasmic side. A helical transmembrane segment spans residues 346-366 (ILVFAFLLLGLSLMGLTFGPM). The Cytoplasmic portion of the chain corresponds to 367 to 384 (GALLPELFPTEVRYTGAS). Residues 385 to 405 (FSYNVASILGASVAPYIAAWL) traverse the membrane as a helical segment. At 406–410 (QTNYG) the chain is on the periplasmic side. Residues 411–431 (LGAVGLYLAAMAGLTLIALLL) traverse the membrane as a helical segment. At 432–440 (THETRHQSL) the chain is on the cytoplasmic side.

It belongs to the major facilitator superfamily. Metabolite:H+ Symporter (MHS) family (TC 2.A.1.6) family.

The protein localises to the cell inner membrane. The protein is Inner membrane metabolite transport protein YhjE (yhjE) of Escherichia coli (strain K12).